We begin with the raw amino-acid sequence, 494 residues long: UPF0371 protein spyM18_1356 (494 aa).

It belongs to the UPF0371 family.

This chain is UPF0371 protein spyM18_1356, found in Streptococcus pyogenes serotype M18 (strain MGAS8232).